Here is a 683-residue protein sequence, read N- to C-terminus: Eukaryotic translation initiation factor 3 subunit B (683 aa).

The interval 1–25 (MAKKKGEEQDFEEEPNFDDPEGFVD) is disordered. Residues 9 to 25 (QDFEEEPNFDDPEGFVD) show a composition bias toward acidic residues. Residues 49–133 (NVIVVDNIPV…YTLLVNRFAD (85 aa)) form the RRM domain. WD repeat units lie at residues 199-238 (KRER…KVNK), 240-279 (AHSN…EKRT), 283-321 (DGMS…LLDM), 324-359 (IRVE…TLMA), 435-477 (EVKE…EPVL), and 522-567 (GDHY…KRVN). Positions 611-638 (MTRASKELIEKRAKLREQFTEYRSKRVK) form a coiled coil.

This sequence belongs to the eIF-3 subunit B family. In terms of assembly, component of the eukaryotic translation initiation factor 3 (eIF-3) complex.

It is found in the cytoplasm. RNA-binding component of the eukaryotic translation initiation factor 3 (eIF-3) complex, which is involved in protein synthesis of a specialized repertoire of mRNAs and, together with other initiation factors, stimulates binding of mRNA and methionyl-tRNAi to the 40S ribosome. The eIF-3 complex specifically targets and initiates translation of a subset of mRNAs involved in cell proliferation. The chain is Eukaryotic translation initiation factor 3 subunit B from Anopheles gambiae (African malaria mosquito).